A 774-amino-acid chain; its full sequence is Alpha,alpha-trehalose phosphorylase (774 aa).

A substrate-binding site is contributed by 369 to 370 (WD). Catalysis depends on Glu-498, which acts as the Proton donor. 610–611 (KQ) is a binding site for substrate.

It belongs to the glycosyl hydrolase 65 family. Homodimer.

It catalyses the reaction alpha,alpha-trehalose + phosphate = beta-D-glucose 1-phosphate + D-glucose. It participates in glycan degradation; trehalose degradation. With respect to regulation, inhibited by Cu(2+), Hg(2+), Mg(2+), Mn(2+), Pb(2+) and Zn(2+). Functionally, catalyzes the reversible phosphorolytic cleavage of trehalose. Phosphorolysis is specific for trehalose, but D-xylose, D-galactose, L-arabinose, D-fucose, L-fucose, D-glucosamine and 2-deoxy D-glucose can act as substitutes for D-glucose in the synthetic reaction. The polypeptide is Alpha,alpha-trehalose phosphorylase (treP) (Thermoanaerobacter brockii (Thermoanaerobium brockii)).